A 259-amino-acid chain; its full sequence is UPF0246 protein Pmen_1032 (259 aa).

This sequence belongs to the UPF0246 family.

The chain is UPF0246 protein Pmen_1032 from Ectopseudomonas mendocina (strain ymp) (Pseudomonas mendocina).